A 174-amino-acid chain; its full sequence is Male-enhanced antigen 1 (174 aa).

Disordered regions lie at residues 1-83 and 95-123; these read MAAV…DGAA and HLPDPPLESEDEDEEGAAALSSHSSIPMD. Composition is skewed to acidic residues over residues 38–48, 65–82, and 101–110; these read SSEEPEEEQEE, PEQEEVELAPVGEGEDGA, and LESEDEDEEG. Ser103 carries the post-translational modification Phosphoserine.

As to expression, highly expressed in testis. Transcripts can be found in primary and secondary spermatocytes, and spermatids, but the protein itself is only detected in spermatids. No expression in Leydig cells, spermatogonia, or sperm. Very weak expression in the heart, kidney, spleen, thymus and ovary.

Functionally, may play an important role in spermatogenesis and/or testis development. The sequence is that of Male-enhanced antigen 1 (Mea1) from Mus musculus (Mouse).